The following is a 66-amino-acid chain: Photosystem II reaction center protein H (66 aa).

Residues 27–47 (GAVPVMTVIGLLLLVFLVILL) form a helical membrane-spanning segment.

It belongs to the PsbH family. PSII is composed of 1 copy each of membrane proteins PsbA, PsbB, PsbC, PsbD, PsbE, PsbF, PsbH, PsbI, PsbJ, PsbK, PsbL, PsbM, PsbT, PsbX, PsbY, Psb30/Ycf12, peripheral proteins PsbO, CyanoQ (PsbQ), PsbU, PsbV and a large number of cofactors. It forms dimeric complexes.

Its subcellular location is the cellular thylakoid membrane. Its function is as follows. One of the components of the core complex of photosystem II (PSII), required for its stability and/or assembly. PSII is a light-driven water:plastoquinone oxidoreductase that uses light energy to abstract electrons from H(2)O, generating O(2) and a proton gradient subsequently used for ATP formation. It consists of a core antenna complex that captures photons, and an electron transfer chain that converts photonic excitation into a charge separation. The polypeptide is Photosystem II reaction center protein H (Prochlorococcus marinus (strain MIT 9215)).